The sequence spans 137 residues: Small ribosomal subunit protein uS12 (137 aa).

Disordered regions lie at residues 1 to 21 (MPTI…KSDS) and 34 to 57 (VHTK…TPKK). Asp102 bears the 3-methylthioaspartic acid mark.

The protein belongs to the universal ribosomal protein uS12 family. In terms of assembly, part of the 30S ribosomal subunit. Contacts proteins S8 and S17. May interact with IF1 in the 30S initiation complex.

With S4 and S5 plays an important role in translational accuracy. Its function is as follows. Interacts with and stabilizes bases of the 16S rRNA that are involved in tRNA selection in the A site and with the mRNA backbone. Located at the interface of the 30S and 50S subunits, it traverses the body of the 30S subunit contacting proteins on the other side and probably holding the rRNA structure together. The combined cluster of proteins S8, S12 and S17 appears to hold together the shoulder and platform of the 30S subunit. The protein is Small ribosomal subunit protein uS12 of Streptococcus uberis (strain ATCC BAA-854 / 0140J).